Here is a 618-residue protein sequence, read N- to C-terminus: Isocitrate dehydrogenase kinase/phosphatase (618 aa).

Residues 332–338 and Lys-353 contribute to the ATP site; that span reads APGIKGM. Residue Asp-388 is part of the active site.

It belongs to the AceK family.

The protein resides in the cytoplasm. It catalyses the reaction L-seryl-[isocitrate dehydrogenase] + ATP = O-phospho-L-seryl-[isocitrate dehydrogenase] + ADP + H(+). In terms of biological role, bifunctional enzyme which can phosphorylate or dephosphorylate isocitrate dehydrogenase (IDH) on a specific serine residue. This is a regulatory mechanism which enables bacteria to bypass the Krebs cycle via the glyoxylate shunt in response to the source of carbon. When bacteria are grown on glucose, IDH is fully active and unphosphorylated, but when grown on acetate or ethanol, the activity of IDH declines drastically concomitant with its phosphorylation. This Methylibium petroleiphilum (strain ATCC BAA-1232 / LMG 22953 / PM1) protein is Isocitrate dehydrogenase kinase/phosphatase.